The chain runs to 499 residues: Glycerol kinase (499 aa).

Residue threonine 13 coordinates ADP. ATP-binding residues include threonine 13, threonine 14, and serine 15. Threonine 13 is a sn-glycerol 3-phosphate binding site. Arginine 17 contributes to the ADP binding site. Arginine 83, glutamate 84, tyrosine 135, and aspartate 245 together coordinate sn-glycerol 3-phosphate. Glycerol contacts are provided by arginine 83, glutamate 84, tyrosine 135, aspartate 245, and glutamine 246. ADP is bound by residues threonine 267 and glycine 310. Residues threonine 267, glycine 310, glutamine 314, and glycine 411 each contribute to the ATP site. Residues glycine 411 and asparagine 415 each coordinate ADP.

Belongs to the FGGY kinase family.

It carries out the reaction glycerol + ATP = sn-glycerol 3-phosphate + ADP + H(+). It functions in the pathway polyol metabolism; glycerol degradation via glycerol kinase pathway; sn-glycerol 3-phosphate from glycerol: step 1/1. Its activity is regulated as follows. Inhibited by fructose 1,6-bisphosphate (FBP). Its function is as follows. Key enzyme in the regulation of glycerol uptake and metabolism. Catalyzes the phosphorylation of glycerol to yield sn-glycerol 3-phosphate. This chain is Glycerol kinase, found in Stenotrophomonas maltophilia (strain K279a).